The sequence spans 335 residues: Ornithine carbamoyltransferase (335 aa).

Carbamoyl phosphate contacts are provided by residues Ser-56–Thr-59, Gln-83, Arg-107, and His-134–Gln-137. Residues Asn-168, Asp-232, and Ser-236–Met-237 contribute to the L-ornithine site. Residues Cys-274–Leu-275 and Arg-320 contribute to the carbamoyl phosphate site.

Belongs to the aspartate/ornithine carbamoyltransferase superfamily. OTCase family.

The protein resides in the cytoplasm. The enzyme catalyses carbamoyl phosphate + L-ornithine = L-citrulline + phosphate + H(+). It functions in the pathway amino-acid biosynthesis; L-arginine biosynthesis; L-arginine from L-ornithine and carbamoyl phosphate: step 1/3. Functionally, reversibly catalyzes the transfer of the carbamoyl group from carbamoyl phosphate (CP) to the N(epsilon) atom of ornithine (ORN) to produce L-citrulline. In Pectobacterium atrosepticum (strain SCRI 1043 / ATCC BAA-672) (Erwinia carotovora subsp. atroseptica), this protein is Ornithine carbamoyltransferase.